Consider the following 1251-residue polypeptide: ATP-dependent helicase/nuclease subunit A (1251 aa).

One can recognise a UvrD-like helicase ATP-binding domain in the interval 5 to 481 (TKWTDEQWEA…IILSRNFRSR (477 aa)). 26–33 (AAAGAGKT) serves as a coordination point for ATP. A UvrD-like helicase C-terminal domain is found at 526–824 (TVGGEVEFHL…RIMSIHKSKG (299 aa)). The tract at residues 544 to 565 (NFTFENEGEEGRQADEGEEDEE) is disordered.

The protein belongs to the helicase family. AddA subfamily. In terms of assembly, heterodimer of AddA and AddB/RexB. Mg(2+) is required as a cofactor.

It carries out the reaction Couples ATP hydrolysis with the unwinding of duplex DNA by translocating in the 3'-5' direction.. It catalyses the reaction ATP + H2O = ADP + phosphate + H(+). The heterodimer acts as both an ATP-dependent DNA helicase and an ATP-dependent, dual-direction single-stranded exonuclease. Recognizes the chi site generating a DNA molecule suitable for the initiation of homologous recombination. The AddA nuclease domain is required for chi fragment generation; this subunit has the helicase and 3' -&gt; 5' nuclease activities. The polypeptide is ATP-dependent helicase/nuclease subunit A (Acetivibrio thermocellus (strain ATCC 27405 / DSM 1237 / JCM 9322 / NBRC 103400 / NCIMB 10682 / NRRL B-4536 / VPI 7372) (Clostridium thermocellum)).